Consider the following 132-residue polypeptide: Fatty acid-binding protein, adipocyte (132 aa).

At Cys-2 the chain carries N-acetylcysteine. Ser-13 is subject to Phosphoserine. At Tyr-20 the chain carries Phosphotyrosine; by Tyr-kinases. Positions 22 to 32 match the Nuclear localization signal motif; it reads KEVGVGFATRK. A fatty acid is bound at residue 127–129; the sequence is RVY.

The protein belongs to the calycin superfamily. Fatty-acid binding protein (FABP) family. In terms of assembly, monomer. Homodimer. Interacts with PPARG.

It localises to the cytoplasm. Its subcellular location is the nucleus. In terms of biological role, lipid transport protein in adipocytes. Binds both long chain fatty acids and retinoic acid. Delivers long-chain fatty acids and retinoic acid to their cognate receptors in the nucleus. FABPs are important elements related to the hibernating state in mammals. This Ictidomys tridecemlineatus (Thirteen-lined ground squirrel) protein is Fatty acid-binding protein, adipocyte (FABP4).